We begin with the raw amino-acid sequence, 30 residues long: Conotoxin CcTx (30 aa).

Residue Pro-2 is modified to 4-hydroxyproline. Ser-7 carries an O-linked (HexNAc...) serine glycan. 3 cysteine pairs are disulfide-bonded: Cys-12–Cys-21, Cys-13–Cys-26, and Cys-24–Cys-30. 4-hydroxyproline occurs at positions 17 and 22.

O-glycosylated at Ser-7 by a core type 9 glycan, containing both D- and L-galactose units (alpha-L-Galp-(1-&gt;4)-alpha-D- GlcpNAc-(1-&gt;6)-[alpha-L-Galp-(1-&gt;2)-bets-D-Galp-(1-&gt;3)-]alpha-D-GalpNAc-(1-&gt;O)). As to expression, expressed by the venom duct.

It is found in the secreted. Its function is as follows. May specifically activate neuronal voltage-gated sodium channels (Nav) at the resting membrane potential. Causes a marked contraction and extension of the caudal and dorsal fins in fish and noticeable spontaneous contractions of isolated frog neuromuscular preparations. The chain is Conotoxin CcTx from Conus consors (Singed cone).